We begin with the raw amino-acid sequence, 288 residues long: Homeobox protein Hox-B4a (288 aa).

Residues Ser10–Asp136 are disordered. Positions Cys118–Ser132 are enriched in polar residues. An Antp-type hexapeptide motif is present at residues Val139–Lys144. The segment at residues Pro160–His219 is a DNA-binding region (homeobox).

It belongs to the Antp homeobox family. Deformed subfamily.

Its subcellular location is the nucleus. Its function is as follows. Sequence-specific transcription factor which is part of a developmental regulatory system that provides cells with specific positional identities on the anterior-posterior axis. The chain is Homeobox protein Hox-B4a (hoxb4a) from Takifugu rubripes (Japanese pufferfish).